A 298-amino-acid polypeptide reads, in one-letter code: ATP phosphoribosyltransferase (298 aa).

This sequence belongs to the ATP phosphoribosyltransferase family. Long subfamily. It depends on Mg(2+) as a cofactor.

It is found in the cytoplasm. It catalyses the reaction 1-(5-phospho-beta-D-ribosyl)-ATP + diphosphate = 5-phospho-alpha-D-ribose 1-diphosphate + ATP. The protein operates within amino-acid biosynthesis; L-histidine biosynthesis; L-histidine from 5-phospho-alpha-D-ribose 1-diphosphate: step 1/9. Feedback inhibited by histidine. Catalyzes the condensation of ATP and 5-phosphoribose 1-diphosphate to form N'-(5'-phosphoribosyl)-ATP (PR-ATP). Has a crucial role in the pathway because the rate of histidine biosynthesis seems to be controlled primarily by regulation of HisG enzymatic activity. In Tolumonas auensis (strain DSM 9187 / NBRC 110442 / TA 4), this protein is ATP phosphoribosyltransferase.